The chain runs to 126 residues: Fluoride-specific ion channel FluC (126 aa).

4 helical membrane passes run 4–24 (LLLVCLGGALGSGARYLTSAW), 36–56 (GTLLVNVSGSFLLAGIMTASL), 67–85 (LFLAAGVMGGFTTYSSFNY), and 101–121 (AYLLATVVGCLVAAFAATLLV). Na(+) contacts are provided by glycine 75 and threonine 78.

The protein belongs to the fluoride channel Fluc/FEX (TC 1.A.43) family.

The protein resides in the cell inner membrane. The enzyme catalyses fluoride(in) = fluoride(out). With respect to regulation, na(+) is not transported, but it plays an essential structural role and its presence is essential for fluoride channel function. Its function is as follows. Fluoride-specific ion channel. Important for reducing fluoride concentration in the cell, thus reducing its toxicity. This is Fluoride-specific ion channel FluC from Anaeromyxobacter sp. (strain K).